Reading from the N-terminus, the 124-residue chain is MALNKEDILTWLEGAKTMEVVDLVTAIEEKFGVTAAVAAGVGGAVSVGSADSEEQTEFDVILMSFGDSKINVIKEVRAITGLGLGEAKALVEAAPKAIKEGLSKSDAEELKKKLEAVGAKVEVK.

The protein belongs to the bacterial ribosomal protein bL12 family. In terms of assembly, homodimer. Part of the ribosomal stalk of the 50S ribosomal subunit. Forms a multimeric L10(L12)X complex, where L10 forms an elongated spine to which 2 to 4 L12 dimers bind in a sequential fashion. Binds GTP-bound translation factors.

Its function is as follows. Forms part of the ribosomal stalk which helps the ribosome interact with GTP-bound translation factors. Is thus essential for accurate translation. The chain is Large ribosomal subunit protein bL12 from Borreliella burgdorferi (strain ATCC 35210 / DSM 4680 / CIP 102532 / B31) (Borrelia burgdorferi).